The following is a 345-amino-acid chain: S-adenosylmethionine:tRNA ribosyltransferase-isomerase (345 aa).

This sequence belongs to the QueA family. In terms of assembly, monomer.

It is found in the cytoplasm. The enzyme catalyses 7-aminomethyl-7-carbaguanosine(34) in tRNA + S-adenosyl-L-methionine = epoxyqueuosine(34) in tRNA + adenine + L-methionine + 2 H(+). It participates in tRNA modification; tRNA-queuosine biosynthesis. In terms of biological role, transfers and isomerizes the ribose moiety from AdoMet to the 7-aminomethyl group of 7-deazaguanine (preQ1-tRNA) to give epoxyqueuosine (oQ-tRNA). The polypeptide is S-adenosylmethionine:tRNA ribosyltransferase-isomerase (Shewanella baltica (strain OS185)).